The sequence spans 180 residues: KNCPACRLRKCCQAGMVLGGRKFKKFNKVRVMRALDAVAVPQPVGLPNESQALTQRITFSPNQEIQLFPPLINLLLSIEPDVIYAGYDNTKPETSSSLLTSLNHLAERQLLSVVKWSKSLPGFRNLHIDDQITLIQYSWMSLMVFGLGWRSYKHVSGQMLYFAPDLILNEQRMKESSFYS.

The NR C4-type zinc finger occupies 1-11; the sequence is KNCPACRLRKC. The nuclear receptor DNA-binding region spans 1–16; it reads KNCPACRLRKCCQAGM. The residue at position 60 (Ser60) is a Phosphoserine. One can recognise an NR LBD domain in the interval 63 to 180; it reads QEIQLFPPLI…QRMKESSFYS (118 aa). The segment at 71-180 is AF2; mediates transcriptional activation; sequence LINLLLSIEP…QRMKESSFYS (110 aa). Arg150 lines the progesterone pocket.

The protein belongs to the nuclear hormone receptor family. NR3 subfamily. Interacts with SMARD1 and UNC45A. Interacts with CUEDC2; the interaction promotes ubiquitination, decreases sumoylation, and represses transcriptional activity. Interacts with PIAS3; the interaction promotes sumoylation of PR in a hormone-dependent manner, inhibits DNA-binding, and alters nuclear export. Interacts with SP1; the interaction requires ligand-induced phosphorylation by ERK1/2-MAPK. Interacts with PRMT2. Interacts with NCOA2 and NCOA1. Interacts with KLF9. Interacts with GTF2B. Post-translationally, phosphorylated on multiple serine sites. Several of these sites are hormone-dependent. In terms of processing, sumoylation is hormone-dependent and represses transcriptional activity. Sumoylation on all three sites is enhanced by PIAS3. Desumoylated by SENP1. Sumoylation is repressed by ubiquitination and modulated by phosphorylation. Ubiquitination is hormone-dependent and represses sumoylation. Post-translationally, palmitoylated by ZDHHC7 and ZDHHC21. Palmitoylation is required for plasma membrane targeting and for rapid intracellular signaling via ERK and AKT kinases and cAMP generation.

Its subcellular location is the nucleus. The protein localises to the cytoplasm. Its function is as follows. The steroid hormones and their receptors are involved in the regulation of eukaryotic gene expression and affect cellular proliferation and differentiation in target tissues. Transcriptional activator of several progesteron-dependent promoters in a variety of cell types. Involved in activation of SRC-dependent MAPK signaling on hormone stimulation. This Notamacropus eugenii (Tammar wallaby) protein is Progesterone receptor (PGR).